Here is a 54-residue protein sequence, read N- to C-terminus: Rubredoxin-1 (54 aa).

The Rubredoxin-like domain occupies 1–52 (MKKWECVVCGFIYDEAEGLPDEGIEPGTAWNNVPEDWVCPDCGVGKDDFEMV). Residues Cys6, Cys9, Cys39, and Cys42 each contribute to the Fe cation site.

This sequence belongs to the rubredoxin family. Fe(3+) serves as cofactor.

Its subcellular location is the cytoplasm. Its pathway is hydrocarbon metabolism; alkane degradation. Its function is as follows. Involved in the hydrocarbon hydroxylating system, which transfers electrons from NADH to rubredoxin reductase and then through rubredoxin to alkane 1 monooxygenase. The chain is Rubredoxin-1 (rubA) from Alcanivorax borkumensis (strain ATCC 700651 / DSM 11573 / NCIMB 13689 / SK2).